Reading from the N-terminus, the 276-residue chain is Large ribosomal subunit protein uL2 (276 aa).

The disordered stretch occupies residues 224 to 276; that stretch reads VAMNPVDHPHGGGEGKTGEGRVPVSPWGTPTKGYRTRRNKRTTSMIVQRRQKR. Residues 230–242 are compositionally biased toward basic and acidic residues; sequence DHPHGGGEGKTGE.

Belongs to the universal ribosomal protein uL2 family. As to quaternary structure, part of the 50S ribosomal subunit. Forms a bridge to the 30S subunit in the 70S ribosome.

In terms of biological role, one of the primary rRNA binding proteins. Required for association of the 30S and 50S subunits to form the 70S ribosome, for tRNA binding and peptide bond formation. It has been suggested to have peptidyltransferase activity; this is somewhat controversial. Makes several contacts with the 16S rRNA in the 70S ribosome. This Polynucleobacter asymbioticus (strain DSM 18221 / CIP 109841 / QLW-P1DMWA-1) (Polynucleobacter necessarius subsp. asymbioticus) protein is Large ribosomal subunit protein uL2.